The chain runs to 177 residues: MSRVAKAPVSIPAGVEVTLNEQTLTVKGAKGSLTRVINNAVNVVIENGVIKFLPVEGAVGAWAQAGTTRALVNNMVVGVSQGFERKLKLVGVGYRAKLVGADIDLTLGFSHPLVHKLPAGVTAECPSQTDIVLRGVDKQLIGQVAAEIRGYRPPEPYKGKGVRYDDEEVRRKEAKKK.

Residues 152–171 (RPPEPYKGKGVRYDDEEVRR) are compositionally biased toward basic and acidic residues. The interval 152 to 177 (RPPEPYKGKGVRYDDEEVRRKEAKKK) is disordered.

This sequence belongs to the universal ribosomal protein uL6 family. Part of the 50S ribosomal subunit.

This protein binds to the 23S rRNA, and is important in its secondary structure. It is located near the subunit interface in the base of the L7/L12 stalk, and near the tRNA binding site of the peptidyltransferase center. The sequence is that of Large ribosomal subunit protein uL6 from Shewanella oneidensis (strain ATCC 700550 / JCM 31522 / CIP 106686 / LMG 19005 / NCIMB 14063 / MR-1).